The chain runs to 477 residues: Diacylglycerol O-acyltransferase 1-2 (477 aa).

The disordered stretch occupies residues 1-48 (MAPPPSLAPDRGGGEPDDALRLRARAAAAAGDAPAPQQQQEQRHQEQQ). A compositionally biased stretch (basic and acidic residues) spans 12–21 (GGGEPDDALR). Residues 25–40 (RAAAAAGDAPAPQQQQ) show a composition bias toward low complexity. 7 consecutive transmembrane segments (helical) span residues 79–99 (HAGL…RLII), 123–143 (WPLL…LMVE), 155–175 (VVIL…VVVI), 182–202 (VLSG…LVSF), 230–250 (NIKW…TLCY), 263–283 (GWVV…GFII), and 319–339 (VWLC…AELL). An FYXDWWN motif motif is present at residues 346–352 (FYKDWWN). 3 helical membrane passes run 387 to 407 (GVAI…CVAV), 409 to 429 (CHIF…LVFL), and 442 to 462 (VGNM…CVLL). His-401 is a catalytic residue.

It belongs to the membrane-bound acyltransferase family. Sterol o-acyltransferase subfamily.

Its subcellular location is the endoplasmic reticulum membrane. It catalyses the reaction an acyl-CoA + a 1,2-diacyl-sn-glycerol = a triacyl-sn-glycerol + CoA. The protein operates within glycerolipid metabolism; triacylglycerol biosynthesis. Its function is as follows. Involved in triacylglycerol (TAG) synthesis. Catalyzes the acylation of the sn-3 hydroxy group of sn-1,2-diacylglycerol using acyl-CoA. This Oryza sativa subsp. japonica (Rice) protein is Diacylglycerol O-acyltransferase 1-2.